Consider the following 389-residue polypeptide: S-adenosylmethionine synthase (389 aa).

H17 contacts ATP. D19 lines the Mg(2+) pocket. E45 contributes to the K(+) binding site. 2 residues coordinate L-methionine: E58 and Q101. Positions Q101–E111 are flexible loop. ATP is bound by residues D168–K170, R234–F235, D243, R249–K250, A266, and K270. D243 provides a ligand contact to L-methionine. L-methionine is bound at residue K274.

The protein belongs to the AdoMet synthase family. In terms of assembly, homotetramer; dimer of dimers. Mg(2+) is required as a cofactor. Requires K(+) as cofactor.

The protein resides in the cytoplasm. The catalysed reaction is L-methionine + ATP + H2O = S-adenosyl-L-methionine + phosphate + diphosphate. It participates in amino-acid biosynthesis; S-adenosyl-L-methionine biosynthesis; S-adenosyl-L-methionine from L-methionine: step 1/1. In terms of biological role, catalyzes the formation of S-adenosylmethionine (AdoMet) from methionine and ATP. The overall synthetic reaction is composed of two sequential steps, AdoMet formation and the subsequent tripolyphosphate hydrolysis which occurs prior to release of AdoMet from the enzyme. The polypeptide is S-adenosylmethionine synthase (Geobacter sulfurreducens (strain ATCC 51573 / DSM 12127 / PCA)).